We begin with the raw amino-acid sequence, 1517 residues long: DNA-directed RNA polymerase subunit beta' (1517 aa).

Zn(2+) contacts are provided by Cys71, Cys73, Cys86, and Cys89. Residues Asp482, Asp484, and Asp486 each contribute to the Mg(2+) site. Cys812, Cys886, Cys893, and Cys896 together coordinate Zn(2+).

It belongs to the RNA polymerase beta' chain family. In terms of assembly, the RNAP catalytic core consists of 2 alpha, 1 beta, 1 beta' and 1 omega subunit. When a sigma factor is associated with the core the holoenzyme is formed, which can initiate transcription. The cofactor is Mg(2+). Zn(2+) is required as a cofactor.

The enzyme catalyses RNA(n) + a ribonucleoside 5'-triphosphate = RNA(n+1) + diphosphate. Functionally, DNA-dependent RNA polymerase catalyzes the transcription of DNA into RNA using the four ribonucleoside triphosphates as substrates. This chain is DNA-directed RNA polymerase subunit beta', found in Campylobacter jejuni subsp. jejuni serotype O:6 (strain 81116 / NCTC 11828).